The sequence spans 314 residues: Hydrolase 4 (314 aa).

Positions 73–75 (HGA) match the Involved in the stabilization of the negatively charged intermediate by the formation of the oxyanion hole motif. Catalysis depends on residues S165 and D260.

Belongs to the 'GDXG' lipolytic enzyme family.

Its pathway is alkaloid biosynthesis. Its function is as follows. Component of the seco-iridoid and derivatives monoterpenoid indole alkaloids (MIAs, e.g. vincadifformine) biosynthesis pathway. Catalyzes the conversion of O-acetylstemmadenine (OAS) to vincadifformine. May also trigger the formation of additional unknown MIAs. The polypeptide is Hydrolase 4 (Catharanthus roseus (Madagascar periwinkle)).